A 184-amino-acid polypeptide reads, in one-letter code: ATP synthase subunit b, chloroplastic (184 aa).

Residues 27 to 49 (LATNPINLSVVLGVLIFFGKGVL) traverse the membrane as a helical segment.

Belongs to the ATPase B chain family. In terms of assembly, F-type ATPases have 2 components, F(1) - the catalytic core - and F(0) - the membrane proton channel. F(1) has five subunits: alpha(3), beta(3), gamma(1), delta(1), epsilon(1). F(0) has four main subunits: a(1), b(1), b'(1) and c(10-14). The alpha and beta chains form an alternating ring which encloses part of the gamma chain. F(1) is attached to F(0) by a central stalk formed by the gamma and epsilon chains, while a peripheral stalk is formed by the delta, b and b' chains.

It is found in the plastid. The protein localises to the chloroplast thylakoid membrane. In terms of biological role, f(1)F(0) ATP synthase produces ATP from ADP in the presence of a proton or sodium gradient. F-type ATPases consist of two structural domains, F(1) containing the extramembraneous catalytic core and F(0) containing the membrane proton channel, linked together by a central stalk and a peripheral stalk. During catalysis, ATP synthesis in the catalytic domain of F(1) is coupled via a rotary mechanism of the central stalk subunits to proton translocation. Its function is as follows. Component of the F(0) channel, it forms part of the peripheral stalk, linking F(1) to F(0). This Gossypium barbadense (Sea Island cotton) protein is ATP synthase subunit b, chloroplastic.